The primary structure comprises 269 residues: Formamidopyrimidine-DNA glycosylase (269 aa).

Pro2 (schiff-base intermediate with DNA) is an active-site residue. Glu3 serves as the catalytic Proton donor. Lys57 acts as the Proton donor; for beta-elimination activity in catalysis. Residues His90, Arg109, and Lys150 each contribute to the DNA site. Residues 235–269 form an FPG-type zinc finger; it reads QVYGRGGEPCRVCGTPIQMAKHGQRSTFFCPACQH. Arg259 acts as the Proton donor; for delta-elimination activity in catalysis.

Belongs to the FPG family. In terms of assembly, monomer. Zn(2+) is required as a cofactor.

The enzyme catalyses Hydrolysis of DNA containing ring-opened 7-methylguanine residues, releasing 2,6-diamino-4-hydroxy-5-(N-methyl)formamidopyrimidine.. It catalyses the reaction 2'-deoxyribonucleotide-(2'-deoxyribose 5'-phosphate)-2'-deoxyribonucleotide-DNA = a 3'-end 2'-deoxyribonucleotide-(2,3-dehydro-2,3-deoxyribose 5'-phosphate)-DNA + a 5'-end 5'-phospho-2'-deoxyribonucleoside-DNA + H(+). Its function is as follows. Involved in base excision repair of DNA damaged by oxidation or by mutagenic agents. Acts as a DNA glycosylase that recognizes and removes damaged bases. Has a preference for oxidized purines, such as 7,8-dihydro-8-oxoguanine (8-oxoG). Has AP (apurinic/apyrimidinic) lyase activity and introduces nicks in the DNA strand. Cleaves the DNA backbone by beta-delta elimination to generate a single-strand break at the site of the removed base with both 3'- and 5'-phosphates. The chain is Formamidopyrimidine-DNA glycosylase from Sodalis glossinidius (strain morsitans).